Here is a 435-residue protein sequence, read N- to C-terminus: MAKFDLTAKNCQYLDRHLTFPLLEFLLQKDIYDQTSLLKFILQTVSKTNMVDYTMDIRERLNMGDELPEELSKRRANVLVKLKELQTEVAPLMKCMEELKNPDSMKDSKSIVHALQQEFDFKHDIIKSAQKLAKYLYECGNYRDSISYLYICLLVMEPADKNYLTVLWGKLAAEILVLNWPTALEDLTRLRDFIDNHNFSPIEVLQQRTWLIHWSVLVFFNHAKGRDLIIEMFLYKPLYLNAIQTMCPHILRYLATAVIINRGRRNALKDLIKIIQQESYTYRDPITEFLEHLYVNFDFEGARMKLHECQTVIVNDFFIIGCLQEFIENARLMIFETFCRIHQCITIGMLADKLNMEPDEAECWIVNLIRNARLDAKIDSKLGHVVMGTQPLSPYQQLVEKIDSLSVRSEALTVLVERKQKAKTQESGEGNWKYY.

The PCI domain occupies Phe219–Leu392.

This sequence belongs to the eIF-3 subunit E family. Component of the eukaryotic translation initiation factor 3 (eIF-3) complex.

Its subcellular location is the cytoplasm. In terms of biological role, component of the eukaryotic translation initiation factor 3 (eIF-3) complex, which is involved in protein synthesis of a specialized repertoire of mRNAs and, together with other initiation factors, stimulates binding of mRNA and methionyl-tRNAi to the 40S ribosome. The eIF-3 complex specifically targets and initiates translation of a subset of mRNAs involved in cell proliferation. This is Eukaryotic translation initiation factor 3 subunit E (eIF3-S6) from Aedes aegypti (Yellowfever mosquito).